Reading from the N-terminus, the 98-residue chain is NADH-ubiquinone oxidoreductase chain 4L (98 aa).

3 helical membrane passes run 1–21 (MSLVHMNIGLAFTVAFLGLLM), 29–49 (SLLCLEGMMLTLFIMSSIMVL), and 61–81 (IILLVFAACEAAVGLSLLVMV).

Belongs to the complex I subunit 4L family. As to quaternary structure, core subunit of respiratory chain NADH dehydrogenase (Complex I) which is composed of 45 different subunits.

It is found in the mitochondrion inner membrane. The catalysed reaction is a ubiquinone + NADH + 5 H(+)(in) = a ubiquinol + NAD(+) + 4 H(+)(out). In terms of biological role, core subunit of the mitochondrial membrane respiratory chain NADH dehydrogenase (Complex I) which catalyzes electron transfer from NADH through the respiratory chain, using ubiquinone as an electron acceptor. Part of the enzyme membrane arm which is embedded in the lipid bilayer and involved in proton translocation. The protein is NADH-ubiquinone oxidoreductase chain 4L (MT-ND4L) of Pseudosoriculus fumidus (Taiwanese brown-toothed shrew).